A 208-amino-acid chain; its full sequence is Outer-membrane lipoprotein carrier protein (208 aa).

The first 22 residues, 1-22 (MKKIFAIAALSLPLFSHFPAFA), serve as a signal peptide directing secretion.

This sequence belongs to the LolA family. As to quaternary structure, monomer.

It localises to the periplasm. In terms of biological role, participates in the translocation of lipoproteins from the inner membrane to the outer membrane. Only forms a complex with a lipoprotein if the residue after the N-terminal Cys is not an aspartate (The Asp acts as a targeting signal to indicate that the lipoprotein should stay in the inner membrane). The sequence is that of Outer-membrane lipoprotein carrier protein from Shewanella halifaxensis (strain HAW-EB4).